A 396-amino-acid chain; its full sequence is Elongation factor Tu 1 (396 aa).

The region spanning lysine 10–glutamate 206 is the tr-type G domain. The G1 stretch occupies residues glycine 19–threonine 26. Position 19–26 (glycine 19–threonine 26) interacts with GTP. Threonine 26 lines the Mg(2+) pocket. Residues glycine 60 to asparagine 64 form a G2 region. A G3 region spans residues aspartate 81–glycine 84. GTP-binding positions include aspartate 81–histidine 85 and asparagine 136–aspartate 139. Residues asparagine 136–aspartate 139 are G4. The interval serine 174–lysine 176 is G5.

The protein belongs to the TRAFAC class translation factor GTPase superfamily. Classic translation factor GTPase family. EF-Tu/EF-1A subfamily. In terms of assembly, monomer.

Its subcellular location is the cytoplasm. The catalysed reaction is GTP + H2O = GDP + phosphate + H(+). Functionally, GTP hydrolase that promotes the GTP-dependent binding of aminoacyl-tRNA to the A-site of ribosomes during protein biosynthesis. This Acidovorax sp. (strain JS42) protein is Elongation factor Tu 1.